A 552-amino-acid chain; its full sequence is Non-structural protein NS1 (552 aa).

Belongs to the orbivirus non-structural protein NS1 family.

This is Non-structural protein NS1 (Segment-5) from Antilocapra americana (Pronghorn).